The primary structure comprises 225 residues: Viral late gene transcription factor 3 (225 aa).

The segment at 7–27 is a zinc-finger region; it reads CSNCKHNGLITESNHEFCIFC.

The protein belongs to the nucleo-cytoplasmic large DNA viruses (NCLDVs) VLTF-3 family. As to quaternary structure, interacts with the late transcription elongation factor H5/VLTF-4. Interacts with the late transcription factors VLTF-1.

Functionally, acts with RNA polymerase to initiate transcription from late gene promoters. The protein is Viral late gene transcription factor 3 (VLTF3) of Fowlpox virus (strain NVSL) (FPV).